The chain runs to 613 residues: Na(+)/H(+) antiporter NhaA 1 (613 aa).

Residues 1–23 (MTEASARTIGPLPSRFSRDPKTP) form a disordered region. The segment at 1–408 (MTEASARTIG…DPARQDEARV (408 aa)) is na(+)/H(+) antiporter NhaA. 11 consecutive transmembrane segments (helical) span residues 29–49 (AAAA…NSPW), 81–101 (GLMA…FVIG), 110–130 (AVPV…FLTF), 138–158 (QAWG…LAVI), 168–188 (IFLL…IALF), 191–211 (DDLK…LAMV), 231–251 (IALY…AVLI), 300–320 (AVGP…NAGV), 337–357 (WGIV…ATAL), 377–397 (GGAA…DVAI), and 408–428 (VGVL…FRIT). One can recognise a Thioredoxin domain in the interval 409-613 (GVLIASVLAF…SLIRALEAGR (205 aa)).

In the N-terminal section; belongs to the NhaA Na(+)/H(+) (TC 2.A.33) antiporter family.

It is found in the cell membrane. It catalyses the reaction Na(+)(in) + 2 H(+)(out) = Na(+)(out) + 2 H(+)(in). Its function is as follows. Na(+)/H(+) antiporter that extrudes sodium in exchange for external protons. This chain is Na(+)/H(+) antiporter NhaA 1, found in Mycobacterium sp. (strain KMS).